Reading from the N-terminus, the 530-residue chain is Arginine-containing cyclodipeptide synthase pthA (530 aa).

A Conserved DDXXE motif motif is present at residues 419-423 (DDRAE).

The protein belongs to the arginine-containing cyclodipeptide synthase family.

It carries out the reaction L-aspartyl-tRNA(Asp) + L-arginyl-tRNA(Arg) = cyclo(L-arginyl-L-aspartyl) + tRNA(Asp) + tRNA(Arg) + 2 H(+). Its pathway is secondary metabolite biosynthesis. Arginine-containing cyclodipeptide synthase; part of the cluster that mediates the biosynthesis of a highly modified cyclo-arginine-aspartate dipeptide (cRD). Within the pathway, pthA acts as the scaffold-generating enzyme and is responsible for formation of the cyclo-Arg-Asp diketopiperazine (cRW) from L-arginyl-tRNA(Arg) + L-aspartyl-tRNA(Asp). Additional enzymes from the cluster then further modify the cyclo-Arg-Asp diketopiperazine (cRW) scaffold. The chain is Arginine-containing cyclodipeptide synthase pthA from Penicillium thymicola.